Reading from the N-terminus, the 1346-residue chain is Zinc finger protein 541 (1346 aa).

Disordered regions lie at residues 1-34 and 113-136; these read MDQYSLGDEGALPSEMHLPSFSESQGLNCSDTLN and EADEGGRATSGSARKGKRQHSSPQ. Residues 21 to 32 are compositionally biased toward polar residues; the sequence is FSESQGLNCSDT. 3 C2H2-type zinc fingers span residues 140–162, 168–190, and 196–220; these read LDCSLCGKVFSSASSLSKHYLTH, HVCKICSKAFKRQDHLTGHMLTH, and FVCIEQGCSKSYCDYRSLRRHYEVH. Disordered regions lie at residues 235-271, 283-328, 437-472, and 578-744; these read ACGDSPHAHESAGQPPPSSLRSLVPPEARSPGSLLPH, VHQK…AAPA, SAVPSREGSESGPGPSSGSPSEESPPGPGGGLEDAL, and SQLP…GGYR. 2 stretches are compositionally biased toward low complexity: residues 294-323 and 440-458; these read PAGASDSEGRNTACPCPASSGSSSCTPAGP and PSREGSESGPGPSSGSPSE. Over residues 671-685 the composition is skewed to polar residues; the sequence is PDISSLAKQLRSSKG. The segment at 838-860 adopts a C2H2-type 4 zinc-finger fold; the sequence is FVCKNCSQMFYTEKGLSSHMCFH. The tract at residues 931–971 is disordered; it reads AMGQEKDGEERDSKESSQQRKRKKRPPPSTAGEPGPAGCHQ. Positions 934-948 are enriched in basic and acidic residues; sequence QEKDGEERDSKESSQ. One can recognise an ELM2 domain in the interval 1053-1145; the sequence is PHINIGSRFQ…VALETLLLRG (93 aa). One can recognise an SANT domain in the interval 1160-1211; it reads TGSDVWTPIEKRLFKKAFYAHKKDFYLIHKMIQTKTVAQCVEYYYIWKKMIK. A disordered region spans residues 1224-1281; that stretch reads VKREPEEVERTEEKVPCSPRERPSHHPTPKLKTKSYRRESILSSSPNAGSKRTPELLG. Basic and acidic residues predominate over residues 1234-1247; sequence TEEKVPCSPRERPS. Positions 1248 to 1258 are enriched in basic residues; sequence HHPTPKLKTKS. A compositionally biased stretch (polar residues) spans 1264–1273; sequence ILSSSPNAGS. Residues 1289–1311 form a C2H2-type 5 zinc finger; that stretch reads FPCRECERVFDKIKSRNAHMKRH.

In terms of assembly, interacts with DNTTIP1. Identified in a complex with KCDT19, HDAC1 and HSPA2. Component of a histone deacetylase complex containing DNTTIP1, ZNF541, HDAC1 and HDAC2. Identified in a complex with HDAC1, HDAC2, DNTTIP1 and KCTD19.

It localises to the nucleus. Transcription regulator which is essential for male fertility and for the completion of meiotic prophase in spermatocytes. Regulates progression of the pachytene stage of meiotic prophase by activating the expression of genes involved in meiosis during spermatogenesis. Maintains the repression of pre-pachytene transcriptional programs, including meiotic double-strand breaks (DSB) formation genes in pachytene spermatocytes and suppresses aberrant DSB formation after mid-pachytene, thus ensuring meiosis progression. This chain is Zinc finger protein 541 (ZNF541), found in Homo sapiens (Human).